We begin with the raw amino-acid sequence, 174 residues long: NADH-quinone oxidoreductase subunit B (174 aa).

[4Fe-4S] cluster contacts are provided by C51, C52, C116, and C146.

It belongs to the complex I 20 kDa subunit family. NDH-1 is composed of 14 different subunits. Subunits NuoB, C, D, E, F, and G constitute the peripheral sector of the complex. [4Fe-4S] cluster serves as cofactor.

It is found in the cell inner membrane. It carries out the reaction a quinone + NADH + 5 H(+)(in) = a quinol + NAD(+) + 4 H(+)(out). Its function is as follows. NDH-1 shuttles electrons from NADH, via FMN and iron-sulfur (Fe-S) centers, to quinones in the respiratory chain. The immediate electron acceptor for the enzyme in this species is believed to be ubiquinone. Couples the redox reaction to proton translocation (for every two electrons transferred, four hydrogen ions are translocated across the cytoplasmic membrane), and thus conserves the redox energy in a proton gradient. The protein is NADH-quinone oxidoreductase subunit B of Anaplasma phagocytophilum (strain HZ).